The following is a 324-amino-acid chain: Dehydrogenase/reductase SDR family member 7C-A (324 aa).

A signal peptide spans 1–17 (MAVPSVMVLPLLIVVFA). 41–65 (VITDAVSGMGSECARLFHAGGARLV) serves as a coordination point for NAD(+). Serine 178 is a binding site for substrate. Residue tyrosine 191 is the Proton acceptor of the active site.

Belongs to the short-chain dehydrogenases/reductases (SDR) family.

It localises to the secreted. In terms of biological role, putative oxidoreductase. The chain is Dehydrogenase/reductase SDR family member 7C-A (dhrs7ca) from Danio rerio (Zebrafish).